Consider the following 437-residue polypeptide: Cobyrinate a,c-diamide synthase (437 aa).

A GATase cobBQ-type domain is found at 241–430 (KIAVAKDEAF…AHVHFFGNLD (190 aa)). Cysteine 323 (nucleophile) is an active-site residue.

It belongs to the CobB/CbiA family. Requires Mg(2+) as cofactor.

The enzyme catalyses cob(II)yrinate + 2 L-glutamine + 2 ATP + 2 H2O = cob(II)yrinate a,c diamide + 2 L-glutamate + 2 ADP + 2 phosphate + 2 H(+). Its pathway is cofactor biosynthesis; adenosylcobalamin biosynthesis; cob(II)yrinate a,c-diamide from sirohydrochlorin (anaerobic route): step 10/10. Functionally, catalyzes the ATP-dependent amidation of the two carboxylate groups at positions a and c of cobyrinate, using either L-glutamine or ammonia as the nitrogen source. In Clostridium acetobutylicum (strain ATCC 824 / DSM 792 / JCM 1419 / IAM 19013 / LMG 5710 / NBRC 13948 / NRRL B-527 / VKM B-1787 / 2291 / W), this protein is Cobyrinate a,c-diamide synthase.